We begin with the raw amino-acid sequence, 249 residues long: MIDALMANILWLVFIIIGGVLISWSVHFVPVGGAPAAMAQATGIGTGTVQLAAGAGLTGLVSAGFMMNVTDNLPLILASGAVGAMIMISVTMIVGTWVYVYGVGCVPSSAKVKYDPITKYRQDLYVSQGTEGHGLPTVSFVSGVIGGLLGGIGGALVYYSLIEVGLTAGLSTGTSSGVTGHELVGIAAMFAIGIFFVNAVIPSYNIGGTIEGFHDPKWKKWPKAVISSFVATILCAIVAVIAISQLGGI.

Transmembrane regions (helical) follow at residues I9 to V29, G47 to M67, L75 to G95, V138 to Y158, L183 to S203, and A224 to S244.

The protein belongs to the MtrD family. In terms of assembly, the complex is composed of 8 subunits; MtrA, MtrB, MtrC, MtrD, MtrE, MtrF, MtrG and MtrH.

It localises to the cell membrane. It catalyses the reaction 5-methyl-5,6,7,8-tetrahydromethanopterin + coenzyme M + 2 Na(+)(in) = 5,6,7,8-tetrahydromethanopterin + methyl-coenzyme M + 2 Na(+)(out). It functions in the pathway one-carbon metabolism; methanogenesis from CO(2); methyl-coenzyme M from 5,10-methylene-5,6,7,8-tetrahydromethanopterin: step 2/2. Functionally, part of a complex that catalyzes the formation of methyl-coenzyme M and tetrahydromethanopterin from coenzyme M and methyl-tetrahydromethanopterin. This is an energy-conserving, sodium-ion translocating step. The protein is Tetrahydromethanopterin S-methyltransferase subunit D of Methanosarcina acetivorans (strain ATCC 35395 / DSM 2834 / JCM 12185 / C2A).